Here is a 267-residue protein sequence, read N- to C-terminus: Proteasome subunit alpha (267 aa).

The tract at residues 231 to 267 (ETLLQERDSKESAESEEPIESEEGKKTGKKSDADSSD) is disordered. Basic and acidic residues-rich tracts occupy residues 234 to 243 (LQERDSKESA) and 252 to 267 (EEGK…DSSD).

This sequence belongs to the peptidase T1A family. As to quaternary structure, the 20S proteasome core is composed of 14 alpha and 14 beta subunits that assemble into four stacked heptameric rings, resulting in a barrel-shaped structure. The two inner rings, each composed of seven catalytic beta subunits, are sandwiched by two outer rings, each composed of seven alpha subunits. The catalytic chamber with the active sites is on the inside of the barrel. Has a gated structure, the ends of the cylinder being occluded by the N-termini of the alpha-subunits. Is capped by the proteasome-associated ATPase, ARC.

The protein localises to the cytoplasm. It functions in the pathway protein degradation; proteasomal Pup-dependent pathway. Its activity is regulated as follows. The formation of the proteasomal ATPase ARC-20S proteasome complex, likely via the docking of the C-termini of ARC into the intersubunit pockets in the alpha-rings, may trigger opening of the gate for substrate entry. Interconversion between the open-gate and close-gate conformations leads to a dynamic regulation of the 20S proteasome proteolysis activity. Functionally, component of the proteasome core, a large protease complex with broad specificity involved in protein degradation. The protein is Proteasome subunit alpha of Mycobacterium ulcerans (strain Agy99).